The primary structure comprises 152 residues: uncharacterized protein (152 aa).

It localises to the mitochondrion. This is an uncharacterized protein from Arabidopsis thaliana (Mouse-ear cress).